The following is a 263-amino-acid chain: Purine nucleoside phosphorylase SAR1163 (263 aa).

Residues H79, C124, and H141 each coordinate Zn(2+).

Belongs to the purine nucleoside phosphorylase YfiH/LACC1 family. As to quaternary structure, homodimer. Cu(2+) is required as a cofactor. It depends on Zn(2+) as a cofactor.

It carries out the reaction adenosine + phosphate = alpha-D-ribose 1-phosphate + adenine. It catalyses the reaction S-methyl-5'-thioadenosine + phosphate = 5-(methylsulfanyl)-alpha-D-ribose 1-phosphate + adenine. The catalysed reaction is inosine + phosphate = alpha-D-ribose 1-phosphate + hypoxanthine. The enzyme catalyses adenosine + H2O + H(+) = inosine + NH4(+). Purine nucleoside enzyme that catalyzes the phosphorolysis of adenosine and inosine nucleosides, yielding D-ribose 1-phosphate and the respective free bases, adenine and hypoxanthine. Also catalyzes the phosphorolysis of S-methyl-5'-thioadenosine into adenine and S-methyl-5-thio-alpha-D-ribose 1-phosphate. Also has adenosine deaminase activity. This is Purine nucleoside phosphorylase SAR1163 from Staphylococcus aureus (strain MRSA252).